Here is a 506-residue protein sequence, read N- to C-terminus: FAD-linked oxidoreductase chry5 (506 aa).

The N-terminal stretch at 1–17 is a signal peptide; it reads MHLQALTGLATLAVTAA. The FAD-binding PCMH-type domain maps to 59–241; sequence LDKPTVNIVA…TSVTSKTYDA (183 aa). Residues Asn205, Asn272, Asn281, Asn389, and Asn431 are each glycosylated (N-linked (GlcNAc...) asparagine).

Belongs to the oxygen-dependent FAD-linked oxidoreductase family. The cofactor is FAD.

It participates in pigment biosynthesis. FAD-linked oxidoreductase; part of the gene cluster that mediates the biosynthesis of the yellow pigment chrysogine. Pyruvic acid and anthranilic acid are likely substrates for the nonribosomal peptide synthetase chry1/NRPS14, with pyruvic acid adenylated by the first A domain and anthranilic acid by the second. If pyruvic acid and anthranilic acid are merged and released from chry1/NRPS14 by hydrolysis, a subsequent amidation would lead to 2-pyruvoylaminobenzamide. This process is probably catalyzed by the amidotransferase chry2 using glutamine as amino donor. The dehydrogenase chry5 that has a terminal berberine bridge domain for C-N cyclization could catalyze the cyclization of 2-pyruvoylaminobenzamide to yield acetyl-4(3H)-quinazolidinone. A final reduction of acetyl-4(3H)-quinazolidinone catalyzed by the oxidoreductase chry4 would result in chrysogine. This is FAD-linked oxidoreductase chry5 from Gibberella zeae (strain ATCC MYA-4620 / CBS 123657 / FGSC 9075 / NRRL 31084 / PH-1) (Wheat head blight fungus).